The sequence spans 1359 residues: MAEAGLRGWLLWALLLRLAQSEPYTTIHQPGYCAFYDECGKNPELSGSLMTLSNVSCLSNTPARKITGDHLILLQKICPRLYTGPNTQACCSAKQLVSLEASLSITKALLTRCPACSDNFVNLHCHNTCSPNQSLFINVTRVAQLGAGQLPAVVAYEAFYQHSFAEQSYDSCSRVRVPAAATLAVGTMCGVYGSALCNAQRWLNFQGDTGNGLAPLDITFHLLEPGQAVGSGIQPLNEGVARCNESQGDDVATCSCQDCAASCPAIARPQALDSTFYLGQMPGSLVLIIILCSVFAVVTILLVGFRVAPARDKSKMVDPKKGTSLSDKLSFSTHTLLGQFFQGWGTWVASWPLTILVLSVIPVVALAAGLVFTELTTDPVELWSAPNSQARSEKAFHDQHFGPFFRTNQVILTAPNRSSYRYDSLLLGPKNFSGILDLDLLLELLELQERLRHLQVWSPEAQRNISLQDICYAPLNPDNTSLYDCCINSLLQYFQNNRTLLLLTANQTLMGQTSQVDWKDHFLYCANAPLTFKDGTALALSCMADYGAPVFPFLAIGGYKGKDYSEAEALIMTFSLNNYPAGDPRLAQAKLWEEAFLEEMRAFQRRMAGMFQVTFMAERSLEDEINRTTAEDLPIFATSYIVIFLYISLALGSYSSWSRVMVDSKATLGLGGVAVVLGAVMAAMGFFSYLGIRSSLVILQVVPFLVLSVGADNIFIFVLEYQRLPRRPGEPREVHIGRALGRVAPSMLLCSLSEAICFFLGALTPMPAVRTFALTSGLAVILDFLLQMSAFVALLSLDSKRQEASRLDVCCCVKPQELPPPGQGEGLLLGFFQKAYAPFLLHWITRGVVLLLFLALFGVSLYSMCHISVGLDQELALPKDSYLLDYFLFLNRYFEVGAPVYFVTTLGYNFSSEAGMNAICSSAGCNNFSFTQKIQYATEFPEQSYLAIPASSWVDDFIDWLTPSSCCRLYISGPNKDKFCPSTVNSLNCLKNCMSITMGSVRPSVEQFHKYLPWFLNDRPNIKCPKGGLAAYSTSVNLTSDGQVLDTVAILSPRLEYSGTISAHCNLYLLDSTSRFMAYHKPLKNSQDYTEALRAARELAANITADLRKVPGTDPAFEVFPYTITNVFYEQYLTILPEGLFMLSLCLVPTFAVSCLLLGLDLRSGLLNLLSIVMILVDTVGFMALWGISYNAVSLINLVSAVGMSVEFVSHITRSFAISTKPTWLERAKEATISMGSAVFAGVAMTNLPGILVLGLAKAQLIQIFFFRLNLLITLLGLLHGLVFLPVILSYVGPDVNPALALEQKRAEEAVAAVMVASCPNHPSRVSTADNIYVNHSFEGSIKGAGAISNFLPNNGRQF.

Residues 1–21 (MAEAGLRGWLLWALLLRLAQS) form the signal peptide. Residues 22 to 284 (EPYTTIHQPG…TFYLGQMPGS (263 aa)) lie on the Extracellular side of the membrane. 9 disulfide bridges follow: Cys33-Cys90, Cys39-Cys57, Cys78-Cys125, Cys91-Cys129, Cys113-Cys254, Cys116-Cys172, Cys189-Cys197, Cys243-Cys259, and Cys256-Cys263. N-linked (GlcNAc...) asparagine glycosylation occurs at Asn54. N-linked (GlcNAc...) asparagine glycosylation is found at Asn132 and Asn138. N-linked (GlcNAc...) asparagine glycosylation is present at Asn244. Residues 285–305 (LVLIIILCSVFAVVTILLVGF) traverse the membrane as a helical segment. At 306 to 351 (RVAPARDKSKMVDPKKGTSLSDKLSFSTHTLLGQFFQGWGTWVASW) the chain is on the cytoplasmic side. The chain crosses the membrane as a helical span at residues 352–372 (PLTILVLSVIPVVALAAGLVF). At 373 to 632 (TELTTDPVEL…DEINRTTAED (260 aa)) the chain is on the extracellular side. Residues Asn416, Asn431, Asn464, Asn479, Asn497, and Asn506 are each glycosylated (N-linked (GlcNAc...) asparagine). The cysteines at positions 471 and 485 are disulfide-linked. The cysteines at positions 525 and 542 are disulfide-linked. An N-linked (GlcNAc...) asparagine glycan is attached at Asn626. Residues 632-797 (DLPIFATSYI…MSAFVALLSL (166 aa)) enclose the SSD domain. The helical transmembrane segment at 633–653 (LPIFATSYIVIFLYISLALGS) threads the bilayer. Over 654 to 666 (YSSWSRVMVDSKA) the chain is Cytoplasmic. The helical transmembrane segment at 667–687 (TLGLGGVAVVLGAVMAAMGFF) threads the bilayer. The Extracellular portion of the chain corresponds to 688 to 696 (SYLGIRSSL). The chain crosses the membrane as a helical span at residues 697–717 (VILQVVPFLVLSVGADNIFIF). The Cytoplasmic segment spans residues 718-742 (VLEYQRLPRRPGEPREVHIGRALGR). A helical transmembrane segment spans residues 743 to 763 (VAPSMLLCSLSEAICFFLGAL). Residues 764-776 (TPMPAVRTFALTS) are Extracellular-facing. The chain crosses the membrane as a helical span at residues 777-797 (GLAVILDFLLQMSAFVALLSL). Topologically, residues 798 to 846 (DSKRQEASRLDVCCCVKPQELPPPGQGEGLLLGFFQKAYAPFLLHWITR) are cytoplasmic. A helical transmembrane segment spans residues 847–867 (GVVLLLFLALFGVSLYSMCHI). The Extracellular portion of the chain corresponds to 868-1139 (SVGLDQELAL…EQYLTILPEG (272 aa)). Intrachain disulfides connect Cys920–Cys925, Cys966–Cys1024, and Cys980–Cys989. The helical transmembrane segment at 1140–1160 (LFMLSLCLVPTFAVSCLLLGL) threads the bilayer. Residues 1161–1168 (DLRSGLLN) lie on the Cytoplasmic side of the membrane. A helical transmembrane segment spans residues 1169–1189 (LLSIVMILVDTVGFMALWGIS). Residues 1190–1191 (YN) lie on the Extracellular side of the membrane. A helical transmembrane segment spans residues 1192–1212 (AVSLINLVSAVGMSVEFVSHI). The Cytoplasmic segment spans residues 1213–1236 (TRSFAISTKPTWLERAKEATISMG). Residues 1237-1257 (SAVFAGVAMTNLPGILVLGLA) traverse the membrane as a helical segment. The Extracellular portion of the chain corresponds to 1258–1268 (KAQLIQIFFFR). The chain crosses the membrane as a helical span at residues 1269–1289 (LNLLITLLGLLHGLVFLPVIL). At 1290–1359 (SYVGPDVNPA…NFLPNNGRQF (70 aa)) the chain is on the cytoplasmic side.

Belongs to the patched family. As to quaternary structure, interacts with RAB11A, MYO5B and RAB11FIP2. Interaction with RAB11A, MYO5B and RAB11FIP2 is required for proper transport to the plasma membrane upon cholesterol depletion. Interacts with NPC2. Interacts with LIMA1. Post-translationally, highly glycosylated. As to expression, widely expressed. Expressed in liver. Also expressed in small intestine, pancreas, kidney, lung, pancreas, spleen, heart, gall bladder, brain, testis, stomach and muscle.

It is found in the apical cell membrane. It localises to the cell membrane. The protein resides in the cytoplasmic vesicle membrane. The enzyme catalyses cholesterol(in) = cholesterol(out). It carries out the reaction sitosterol(out) = sitosterol(in). In terms of biological role, plays a major role in cholesterol homeostasis. Critical for the uptake of cholesterol across the plasma membrane of the intestinal enterocyte. Involved in plant sterol absorption, it transports sitosterol, although at lower rates than cholesterol. Is the direct molecular target of ezetimibe, a drug that inhibits cholesterol absorption and is approved for the treatment of hypercholesterolemia. May have a function in the transport of multiple lipids and their homeostasis, thereby influencing lipid metabolism regulation. May be involved in caveolin trafficking from the plasma membrane. In addition, acts as a negative regulator of NPC2 and down-regulates its expression and secretion by inhibiting its maturation and accelerating its degradation. The chain is NPC1-like intracellular cholesterol transporter 1 from Homo sapiens (Human).